Consider the following 528-residue polypeptide: GMP synthase [glutamine-hydrolyzing] (528 aa).

Positions 13 to 204 (AIVILDFGSQ…VYHVCGCDPD (192 aa)) constitute a Glutamine amidotransferase type-1 domain. Cys90 (nucleophile) is an active-site residue. Catalysis depends on residues His178 and Glu180. Positions 205 to 403 (WTTAAFIDEA…LGLPEEIVRR (199 aa)) constitute a GMPS ATP-PPase domain. Residue 232–238 (SGGVDSS) coordinates ATP.

As to quaternary structure, homodimer.

It carries out the reaction XMP + L-glutamine + ATP + H2O = GMP + L-glutamate + AMP + diphosphate + 2 H(+). It functions in the pathway purine metabolism; GMP biosynthesis; GMP from XMP (L-Gln route): step 1/1. Its function is as follows. Catalyzes the synthesis of GMP from XMP. This is GMP synthase [glutamine-hydrolyzing] from Synechococcus sp. (strain CC9605).